Here is a 438-residue protein sequence, read N- to C-terminus: Glutamate-1-semialdehyde 2,1-aminomutase (438 aa).

N6-(pyridoxal phosphate)lysine is present on K272.

The protein belongs to the class-III pyridoxal-phosphate-dependent aminotransferase family. HemL subfamily. As to quaternary structure, homodimer. Requires pyridoxal 5'-phosphate as cofactor.

The protein resides in the cytoplasm. The enzyme catalyses (S)-4-amino-5-oxopentanoate = 5-aminolevulinate. It participates in porphyrin-containing compound metabolism; protoporphyrin-IX biosynthesis; 5-aminolevulinate from L-glutamyl-tRNA(Glu): step 2/2. Its pathway is porphyrin-containing compound metabolism; chlorophyll biosynthesis. This chain is Glutamate-1-semialdehyde 2,1-aminomutase, found in Chloroflexus aggregans (strain MD-66 / DSM 9485).